Reading from the N-terminus, the 876-residue chain is GRB2-associated and regulator of MAPK protein (876 aa).

Residues 9-318 (KDVKWSSASF…NLIKGEVWQD (310 aa)) form a CABIT region. Residue Y451 is modified to Phosphotyrosine. 2 disordered regions span residues 460-569 (SVKR…TLSY) and 708-741 (DRML…LSEP). The segment covering 461–471 (VKRSGQPLTRS) has biased composition (polar residues). Pro residues predominate over residues 532–549 (PPVPPRSSKPSSPTPSVP). Residues 556 to 569 (VRQQTRSPSPTLSY) show a composition bias toward polar residues. An SAM domain is found at 811-876 (LSVEEVSKSL…QFINGWRPKM (66 aa)).

Belongs to the GAREM family.

In terms of biological role, adapter protein that may provide a link between cell surface epidermal growth factor receptor and the MAPK/ERK signaling pathway. May promote cell proliferation. This chain is GRB2-associated and regulator of MAPK protein (garem1), found in Xenopus laevis (African clawed frog).